The chain runs to 308 residues: Methionyl-tRNA formyltransferase (308 aa).

109–112 contacts (6S)-5,6,7,8-tetrahydrofolate; that stretch reads SLLP.

This sequence belongs to the Fmt family.

It catalyses the reaction L-methionyl-tRNA(fMet) + (6R)-10-formyltetrahydrofolate = N-formyl-L-methionyl-tRNA(fMet) + (6S)-5,6,7,8-tetrahydrofolate + H(+). Attaches a formyl group to the free amino group of methionyl-tRNA(fMet). The formyl group appears to play a dual role in the initiator identity of N-formylmethionyl-tRNA by promoting its recognition by IF2 and preventing the misappropriation of this tRNA by the elongation apparatus. This Salinispora tropica (strain ATCC BAA-916 / DSM 44818 / JCM 13857 / NBRC 105044 / CNB-440) protein is Methionyl-tRNA formyltransferase.